The following is a 218-amino-acid chain: Chymotrypsin-2 (218 aa).

A Peptidase S1 domain is found at 1 to 218 (IVGGTDAPRG…FLDWIQKNQL (218 aa)). A disulfide bond links Cys25 and Cys40. Active-site charge relay system residues include His39 and Asp84. Disulfide bonds link Cys148–Cys161 and Cys171–Cys195. Ser175 functions as the Charge relay system in the catalytic mechanism.

It belongs to the peptidase S1 family.

The protein localises to the secreted. The protein resides in the extracellular space. The enzyme catalyses Preferential cleavage: Tyr-|-Xaa, Trp-|-Xaa, Phe-|-Xaa, Leu-|-Xaa.. This Vespa crabro (European hornet) protein is Chymotrypsin-2.